A 271-amino-acid chain; its full sequence is Bifunctional protein FolD (271 aa).

Residues 154–156 (GRS), Ser181, and Ile222 contribute to the NADP(+) site.

This sequence belongs to the tetrahydrofolate dehydrogenase/cyclohydrolase family. Homodimer.

The catalysed reaction is (6R)-5,10-methylene-5,6,7,8-tetrahydrofolate + NADP(+) = (6R)-5,10-methenyltetrahydrofolate + NADPH. The enzyme catalyses (6R)-5,10-methenyltetrahydrofolate + H2O = (6R)-10-formyltetrahydrofolate + H(+). The protein operates within one-carbon metabolism; tetrahydrofolate interconversion. Its function is as follows. Catalyzes the oxidation of 5,10-methylenetetrahydrofolate to 5,10-methenyltetrahydrofolate and then the hydrolysis of 5,10-methenyltetrahydrofolate to 10-formyltetrahydrofolate. The sequence is that of Bifunctional protein FolD from Thermotoga sp. (strain RQ2).